The following is a 565-amino-acid chain: MKATQTLIATTKELPKEAVLISHQYMLKAGLIKKLASGIYTWMPLGLKVLQKIQNIVRDEMNKAGASELLLPSILPSELLQETHRWDKFGPELLKLHDRHNRDFCYGPTHEEPIVDMARDTIKSYKQLPLNLYQIQTKFRDEIRPRFGVMRAREFIMKDAYSFHENSQCLRNTYNTMYATYCNILDKIGLAYRPVKADTGAIGGDNSHEFQVLANAGEDIICYSNGSDYAANIELATYAKPDLSKRVNSQNTIEKIHTPNIKTIEKLCKEMSFDIKKTIKTMVIKDAGGNFFALVIRGDHELNETKINKLDQIIAPYTLATKEEIFSIFNANPGSLGIYNCPISIIADYSAIAITDLVCGANEDDYHFTNVNWDRDVTNYQIADIRNVVTGDISPDGKGTLELTNGIEVGHIFELEDVYSKPMNANIIGQDGKSKPMLMGCYGFGVSRVMAAAIEQSHDENGIIWPESIAPYQVAILPINYNKSDKVKEVADKLCQDLLGDGIDVLLDDRGARPGVMFADADLIGYSHHVVIGDRLLEQGLIEYKNRKTQEKQEITIAELIKLLK.

It belongs to the class-II aminoacyl-tRNA synthetase family. ProS type 1 subfamily. Homodimer.

It is found in the cytoplasm. The enzyme catalyses tRNA(Pro) + L-proline + ATP = L-prolyl-tRNA(Pro) + AMP + diphosphate. Functionally, catalyzes the attachment of proline to tRNA(Pro) in a two-step reaction: proline is first activated by ATP to form Pro-AMP and then transferred to the acceptor end of tRNA(Pro). As ProRS can inadvertently accommodate and process non-cognate amino acids such as alanine and cysteine, to avoid such errors it has two additional distinct editing activities against alanine. One activity is designated as 'pretransfer' editing and involves the tRNA(Pro)-independent hydrolysis of activated Ala-AMP. The other activity is designated 'posttransfer' editing and involves deacylation of mischarged Ala-tRNA(Pro). The misacylated Cys-tRNA(Pro) is not edited by ProRS. This chain is Proline--tRNA ligase, found in Francisella tularensis subsp. holarctica (strain FTNF002-00 / FTA).